Reading from the N-terminus, the 119-residue chain is Large ribosomal subunit protein uL18 (119 aa).

The protein belongs to the universal ribosomal protein uL18 family. Part of the 50S ribosomal subunit; part of the 5S rRNA/L5/L18/L25 subcomplex. Contacts the 5S and 23S rRNAs.

This is one of the proteins that bind and probably mediate the attachment of the 5S RNA into the large ribosomal subunit, where it forms part of the central protuberance. The protein is Large ribosomal subunit protein uL18 of Helicobacter pylori (strain HPAG1).